The sequence spans 245 residues: MKDVIVIKIGGVAAQKLSDKFIKQMQEWIAAGKKIVVVHGGGLVINQLMKERQLPTRKVKGLRVTAKSDLPIIEQALLGQVGRTLTQELNDSDIESLQLVSHLGKTVLADFIDKDLYGYVGQVTAIQTAYLEQLLDADMVPVLASLGENAAGELLNINADYLAAAVASSLQAEKLILMTDIEGVLEDKKVLPQLLTSQISKKIQTGVIKGGMIPKIESAVQTVLSGVGQVLIGDNLLTGTLIAEG.

Substrate contacts are provided by residues 41–42 (GG), R63, and N156.

It belongs to the acetylglutamate kinase family. ArgB subfamily.

The protein resides in the cytoplasm. It carries out the reaction N-acetyl-L-glutamate + ATP = N-acetyl-L-glutamyl 5-phosphate + ADP. It functions in the pathway amino-acid biosynthesis; L-arginine biosynthesis; N(2)-acetyl-L-ornithine from L-glutamate: step 2/4. In terms of biological role, catalyzes the ATP-dependent phosphorylation of N-acetyl-L-glutamate. This chain is Acetylglutamate kinase, found in Streptococcus sanguinis (strain SK36).